The chain runs to 560 residues: OTU domain-containing protein 5-A (560 aa).

Disordered regions lie at residues 1–100 (MTIL…MACV) and 141–190 (GGGT…QSED). A compositionally biased stretch (basic and acidic residues) spans 17-32 (DHPDDPDRRTGSDPHQ). Gly residues predominate over residues 141 to 163 (GGGTGPGAAGGGGGGGGGGGVGG). In terms of domain architecture, OTU spans 211–334 (FVIKKMKEDG…NIHYNSVVNP (124 aa)). The cys-loop stretch occupies residues 216 to 222 (MKEDGAC). Residue Asp-219 is part of the active site. Cys-222 serves as the catalytic Nucleophile. The tract at residues 271–281 (KRKNNCHGNHI) is variable-loop. The his-loop stretch occupies residues 322–327 (YHRNIH). His-327 is an active-site residue. The disordered stretch occupies residues 411–496 (ARQPRKASAT…ACVGPDRPTS (86 aa)). Composition is skewed to low complexity over residues 417–430 (ASAT…AASS) and 437–448 (ARSPRQRSSAPS).

The protein belongs to the peptidase C85 family.

It carries out the reaction Thiol-dependent hydrolysis of ester, thioester, amide, peptide and isopeptide bonds formed by the C-terminal Gly of ubiquitin (a 76-residue protein attached to proteins as an intracellular targeting signal).. Its function is as follows. Deubiquitinating enzyme that may function as negative regulator of the innate immune system. Has peptidase activity towards 'Lys-48'- and 'Lys-63'-linked polyubiquitin chains. Can also cleave 'Lys-11'-linked ubiquitin chains (in vitro). The chain is OTU domain-containing protein 5-A (otud5a) from Danio rerio (Zebrafish).